Here is a 62-residue protein sequence, read N- to C-terminus: Photosystem II reaction center protein Z (62 aa).

A run of 2 helical transmembrane segments spans residues 8–28 and 41–61; these read AVFA…VVLA and FSGA…NSFI.

This sequence belongs to the PsbZ family. PSII is composed of 1 copy each of membrane proteins PsbA, PsbB, PsbC, PsbD, PsbE, PsbF, PsbH, PsbI, PsbJ, PsbK, PsbL, PsbM, PsbT, PsbY, PsbZ, Psb30/Ycf12, at least 3 peripheral proteins of the oxygen-evolving complex and a large number of cofactors. It forms dimeric complexes.

It is found in the plastid. The protein resides in the chloroplast thylakoid membrane. In terms of biological role, may control the interaction of photosystem II (PSII) cores with the light-harvesting antenna, regulates electron flow through the 2 photosystem reaction centers. PSII is a light-driven water plastoquinone oxidoreductase, using light energy to abstract electrons from H(2)O, generating a proton gradient subsequently used for ATP formation. The polypeptide is Photosystem II reaction center protein Z (Anthoceros angustus (Hornwort)).